The sequence spans 516 residues: Probable inactive beta-glucosidase 14 (516 aa).

Residues methionine 1–alanine 23 form the signal peptide. Residues glutamine 43, histidine 145, and asparagine 190–glutamine 191 each bind a beta-D-glucoside. Asparagine 193 is a glycosylation site (N-linked (GlcNAc...) asparagine). Cysteines 210 and 217 form a disulfide. 2 N-linked (GlcNAc...) asparagine glycosylation sites follow: asparagine 221 and asparagine 270. Tyrosine 334 is an a beta-D-glucoside binding site. Cysteine 342 and cysteine 347 are disulfide-bonded. Glutamate 405 is a binding site for a beta-D-glucoside. Glutamate 405 functions as the Nucleophile in the catalytic mechanism. N-linked (GlcNAc...) asparagine glycosylation is found at asparagine 415 and asparagine 423. A beta-D-glucoside-binding positions include tryptophan 454, glutamate 461 to tryptophan 462, and phenylalanine 470.

Belongs to the glycosyl hydrolase 1 family. As to expression, expressed in flowers and endosperm.

In Oryza sativa subsp. japonica (Rice), this protein is Probable inactive beta-glucosidase 14.